Consider the following 752-residue polypeptide: Photosystem I P700 chlorophyll a apoprotein A1 (752 aa).

Transmembrane regions (helical) follow at residues 73 to 96, 159 to 182, 198 to 222, 294 to 312, 349 to 372, 388 to 414, 436 to 458, and 533 to 551; these read IFSA…FHGA, LYWT…FHYH, MNHH…HIAL, IAHH…GHMY, WHAQ…HHMY, LSLF…IFMV, AIIS…FYIH, and FMVH…LILL. [4Fe-4S] cluster is bound by residues Cys-575 and Cys-584. Transmembrane regions (helical) follow at residues 591–612 and 666–688; these read HVFL…HFSW and SSAY…MFLF. Residue His-677 coordinates chlorophyll a'. Met-685 and Tyr-693 together coordinate chlorophyll a. Residue Trp-694 participates in phylloquinone binding. A helical transmembrane segment spans residues 726–746; that stretch reads AVGLAHYLLGGIGTTWAFFLA.

This sequence belongs to the PsaA/PsaB family. In terms of assembly, the PsaA/B heterodimer binds the P700 chlorophyll special pair and subsequent electron acceptors. PSI consists of a core antenna complex that captures photons, and an electron transfer chain that converts photonic excitation into a charge separation. The eukaryotic PSI reaction center is composed of at least 11 subunits. P700 is a chlorophyll a/chlorophyll a' dimer, A0 is one or more chlorophyll a, A1 is one or both phylloquinones and FX is a shared 4Fe-4S iron-sulfur center. is required as a cofactor.

It is found in the plastid. The protein localises to the chloroplast thylakoid membrane. The catalysed reaction is reduced [plastocyanin] + hnu + oxidized [2Fe-2S]-[ferredoxin] = oxidized [plastocyanin] + reduced [2Fe-2S]-[ferredoxin]. In terms of biological role, psaA and PsaB bind P700, the primary electron donor of photosystem I (PSI), as well as the electron acceptors A0, A1 and FX. PSI is a plastocyanin/cytochrome c6-ferredoxin oxidoreductase, converting photonic excitation into a charge separation, which transfers an electron from the donor P700 chlorophyll pair to the spectroscopically characterized acceptors A0, A1, FX, FA and FB in turn. Oxidized P700 is reduced on the lumenal side of the thylakoid membrane by plastocyanin or cytochrome c6. This Thalassiosira pseudonana (Marine diatom) protein is Photosystem I P700 chlorophyll a apoprotein A1.